The chain runs to 246 residues: tRNA (guanine-N(1)-)-methyltransferase (246 aa).

S-adenosyl-L-methionine-binding positions include Gly113 and 132 to 137; that span reads LGDFVV.

It belongs to the RNA methyltransferase TrmD family. Homodimer.

The protein resides in the cytoplasm. It carries out the reaction guanosine(37) in tRNA + S-adenosyl-L-methionine = N(1)-methylguanosine(37) in tRNA + S-adenosyl-L-homocysteine + H(+). Its function is as follows. Specifically methylates guanosine-37 in various tRNAs. The polypeptide is tRNA (guanine-N(1)-)-methyltransferase (Latilactobacillus sakei subsp. sakei (strain 23K) (Lactobacillus sakei subsp. sakei)).